Reading from the N-terminus, the 347-residue chain is MKYSVGITALLATLAQGAAVMSKRDIPLDVKIQVVNNSEVKASITNSGSSSIKVVKTGSILDSADVEKSVIMAGENKVAFDGIRYQVATAGLPAEAFQIIEAGETIEVSFNVASTHDFAQGGDFDIAALGTFSVAESDSGDIFSAMAFESNHIKAHIDGTEAAKVRRSYLAKRTMVQSDCTGTRLTQTTNAINSCRSLAQRAASAAQSNSAKMNEYFKSTSSSAVNTVVTTFNRIASECNPSGGASRQYCTDQIGACSPGVIAYTVPSQSIMVNCPTFFTMPTTSNACRAQTQDNTILHEVTHLSQVKGTQDYNCYGYTCMRQLTSAQNLNHADTYTLFAQAIKVGC.

The first 19 residues, 1-19 (MKYSVGITALLATLAQGAA), serve as a signal peptide directing secretion. A propeptide spanning residues 20-176 (VMSKRDIPLD…RSYLAKRTMV (157 aa)) is cleaved from the precursor. Intrachain disulfides connect Cys-180–Cys-250 and Cys-257–Cys-275. His-299 serves as a coordination point for Zn(2+). Residue Glu-300 is part of the active site. His-303 serves as a coordination point for Zn(2+).

Belongs to the peptidase M35 family. It depends on Zn(2+) as a cofactor.

It is found in the secreted. It catalyses the reaction Preferential cleavage of bonds with hydrophobic residues in P1'. Also 3-Asn-|-Gln-4 and 8-Gly-|-Ser-9 bonds in insulin B chain.. Its function is as follows. Secreted metalloproteinase that allows assimilation of proteinaceous substrates. Shows high activities on basic nuclear substrates such as histone and protamine. This is Neutral protease 2 homolog MGG_10927 from Pyricularia oryzae (strain 70-15 / ATCC MYA-4617 / FGSC 8958) (Rice blast fungus).